We begin with the raw amino-acid sequence, 523 residues long: REST corepressor 2 (523 aa).

Residues 1 to 43 (MPSVMEKPSAGSGILSRSRAKTAPNGGQPHSEDDSSEEEHSHD) are disordered. Residues 30-43 (HSEDDSSEEEHSHD) show a composition bias toward basic and acidic residues. Phosphoserine is present on residues serine 31, serine 35, serine 36, and serine 63. The ELM2 domain occupies 44–129 (SMIRVGTNYQ…KSLADLANFT (86 aa)). A Glycyl lysine isopeptide (Lys-Gly) (interchain with G-Cter in SUMO2) cross-link involves residue lysine 88. In terms of domain architecture, SANT 1 spans 130 to 181 (PFPDEWTVEDKVLFEQAFGFHGKCFQRIQQMLPDKVIPSLVKYYYSWKKTRS). The tract at residues 185 to 244 (VMDRQARRLGGRKDKEDSDELEEGRGAVSEGEPDTGDPKREPLPSRPLNARPGPGKKEVQ) is disordered. Serine 202 bears the Phosphoserine mark. Residues 283 to 314 (TLRGLDSQLISLKRQVQSMKQTNSSLRQALEG) adopt a coiled-coil conformation. An SANT 2 domain is found at 327 to 378 (KFNSRWTTDEQLLAVQAIRRYGKDFGAIAEVIGNKTLTQVKTFFVSYRRRFN). Positions 387-523 (EAEQDGAPAA…APLEPPAPSL (137 aa)) are disordered. The span at 432-459 (SVPPAPPPPPPPTSLSQPPPLLRPPLPT) shows a compositional bias: pro residues. Residues 460 to 482 (APTLLRQPPPLQQGRFLQPRLAP) show a composition bias toward low complexity. The residue at position 479 (arginine 479) is an Asymmetric dimethylarginine. Residues 504–523 (GPQPPPTLVGAPLEPPAPSL) are compositionally biased toward pro residues.

This sequence belongs to the CoREST family. In terms of tissue distribution, predominantly, but not exclusively, expressed in neural tissue. Strongly expressed in neural domains of the developing brain of the developing mouse CNS.

The protein resides in the nucleus. May act as a component of a corepressor complex that represses transcription. The sequence is that of REST corepressor 2 (Rcor2) from Mus musculus (Mouse).